A 62-amino-acid polypeptide reads, in one-letter code: DNA-directed RNA polymerase subunit Rpo10 (62 aa).

Cys-6, Cys-9, Cys-43, and Cys-44 together coordinate Zn(2+).

Belongs to the archaeal Rpo10/eukaryotic RPB10 RNA polymerase subunit family. As to quaternary structure, part of the RNA polymerase complex. Zn(2+) serves as cofactor.

The protein resides in the cytoplasm. The catalysed reaction is RNA(n) + a ribonucleoside 5'-triphosphate = RNA(n+1) + diphosphate. Its function is as follows. DNA-dependent RNA polymerase (RNAP) catalyzes the transcription of DNA into RNA using the four ribonucleoside triphosphates as substrates. This chain is DNA-directed RNA polymerase subunit Rpo10, found in Methanosphaerula palustris (strain ATCC BAA-1556 / DSM 19958 / E1-9c).